Here is a 142-residue protein sequence, read N- to C-terminus: MLLSADDKKHIKAIMPSIAAHGDKFGGEASYRMFLVNPKTKTYFPSFDFHHNSKQITSHGKKVVDALNEAANHLDNIAGSMSKLSDLHAYDLRVDPGNFPLLAHNLLVVVAMHFPKQFDPATHKALDKFLATVSTVLTSKYR.

The region spanning 2-142 (LLSADDKKHI…VSTVLTSKYR (141 aa)) is the Globin domain. Position 59 (His-59) interacts with O2. His-88 contacts heme b.

The protein belongs to the globin family. As to quaternary structure, heterotetramer of two alpha chains and two beta chains. Red blood cells.

Functionally, involved in oxygen transport from the lung to the various peripheral tissues. This is Hemoglobin subunit alpha-2 (hba2) from Xenopus laevis (African clawed frog).